A 164-amino-acid chain; its full sequence is UPF0304 protein YfbU (164 aa).

This sequence belongs to the UPF0304 family.

The protein is UPF0304 protein YfbU (yfbU) of Escherichia coli O6:H1 (strain CFT073 / ATCC 700928 / UPEC).